Reading from the N-terminus, the 342-residue chain is Ribosomal RNA small subunit methyltransferase C (342 aa).

Belongs to the methyltransferase superfamily. RsmC family. Monomer.

The protein resides in the cytoplasm. The catalysed reaction is guanosine(1207) in 16S rRNA + S-adenosyl-L-methionine = N(2)-methylguanosine(1207) in 16S rRNA + S-adenosyl-L-homocysteine + H(+). In terms of biological role, specifically methylates the guanine in position 1207 of 16S rRNA in the 30S particle. This is Ribosomal RNA small subunit methyltransferase C from Salmonella heidelberg (strain SL476).